Reading from the N-terminus, the 307-residue chain is S-methyl-5'-thioadenosine phosphorylase (307 aa).

Phosphate-binding positions include T20, 62–63 (RH), and 95–96 (SA). M197 serves as a coordination point for substrate. A phosphate-binding site is contributed by S198. 221-223 (DYD) contributes to the substrate binding site.

This sequence belongs to the PNP/MTAP phosphorylase family. MTAP subfamily. As to quaternary structure, homotrimer.

The protein localises to the cytoplasm. It localises to the nucleus. The catalysed reaction is S-methyl-5'-thioadenosine + phosphate = 5-(methylsulfanyl)-alpha-D-ribose 1-phosphate + adenine. The protein operates within amino-acid biosynthesis; L-methionine biosynthesis via salvage pathway; S-methyl-5-thio-alpha-D-ribose 1-phosphate from S-methyl-5'-thioadenosine (phosphorylase route): step 1/1. Its function is as follows. Catalyzes the reversible phosphorylation of S-methyl-5'-thioadenosine (MTA) to adenine and 5-methylthioribose-1-phosphate. Involved in the breakdown of MTA, a major by-product of polyamine biosynthesis. Responsible for the first step in the methionine salvage pathway after MTA has been generated from S-adenosylmethionine. Has broad substrate specificity with 6-aminopurine nucleosides as preferred substrates. This Fusarium vanettenii (strain ATCC MYA-4622 / CBS 123669 / FGSC 9596 / NRRL 45880 / 77-13-4) (Fusarium solani subsp. pisi) protein is S-methyl-5'-thioadenosine phosphorylase.